An 822-amino-acid chain; its full sequence is Tyrosine-protein kinase Fer (822 aa).

Positions 1–259 constitute an F-BAR domain; the sequence is MGFGSDLKNS…SVEQIDPSTE (259 aa). An important for interaction with membranes containing phosphoinositides region spans residues 1-300; that stretch reads MGFGSDLKNS…QANEIMWNNL (300 aa). Coiled-coil stretches lie at residues 123 to 185 and 301 to 390; these read AEMI…HNQY and TAES…KVQE. Residue tyrosine 402 is modified to Phosphotyrosine. Serine 434 carries the phosphoserine modification. Residues 460–550 enclose the SH2 domain; sequence WYHGAIPRIE…KSGVVLLNPI (91 aa). The region spanning 563–816 is the Protein kinase domain; that stretch reads VILGELLGKG…FSELQKELTI (254 aa). ATP is bound by residues 569–577 and lysine 591; that span reads LGKGNFGEV. Residue tyrosine 615 is modified to Phosphotyrosine; by autocatalysis. Aspartate 684 serves as the catalytic Proton acceptor. At tyrosine 714 the chain carries Phosphotyrosine; by autocatalysis.

Belongs to the protein kinase superfamily. Tyr protein kinase family. Fes/fps subfamily. Homotrimer. Interacts with ARHGDIA, IRS1, JAK1, NRP1, PIK3R1, PLEC and TMF1. Interacts with PPP1CA and regulates its phosphorylation at 'Thr-320'. Interacts with CTNND1, EGFR, FLT3, PECAM1, PDGFR and STAT3. Interacts (via SH2 domain) with CTTN. Interacts with HSP90; this stabilizes phosphorylated FER and protects FER against proteasomal degradation. Component of a complex that contains at least FER, CTTN and PTK2/FAK1. Post-translationally, autophosphorylated. Polyubiquitinated; this leads to proteasomal degradation. In terms of tissue distribution, isoform 1 is detected in normal colon and in fibroblasts (at protein level). Isoform 3 is detected in normal testis, in colon carcinoma-derived metastases in lung, liver and ovary, and in colon carcinoma and hepato carcinoma cell lines (at protein level). Isoform 3 is not detected in normal colon or in normal fibroblasts (at protein level). Widely expressed.

It localises to the cytoplasm. The protein localises to the cytoskeleton. It is found in the cell membrane. The protein resides in the cell projection. Its subcellular location is the cell junction. It localises to the membrane. The protein localises to the nucleus. It is found in the cell cortex. The catalysed reaction is L-tyrosyl-[protein] + ATP = O-phospho-L-tyrosyl-[protein] + ADP + H(+). Its activity is regulated as follows. Activated by phosphatidic acid binding. Activated by hydrogen peroxide (in vitro). Activated by reactive oxygen species (ROS). Its function is as follows. Tyrosine-protein kinase that acts downstream of cell surface receptors for growth factors and plays a role in the regulation of the actin cytoskeleton, microtubule assembly, lamellipodia formation, cell adhesion, cell migration and chemotaxis. Acts downstream of EGFR, KIT, PDGFRA and PDGFRB. Acts downstream of EGFR to promote activation of NF-kappa-B and cell proliferation. May play a role in the regulation of the mitotic cell cycle. Plays a role in the insulin receptor signaling pathway and in activation of phosphatidylinositol 3-kinase. Acts downstream of the activated FCER1 receptor and plays a role in FCER1 (high affinity immunoglobulin epsilon receptor)-mediated signaling in mast cells. Plays a role in the regulation of mast cell degranulation. Plays a role in leukocyte recruitment and diapedesis in response to bacterial lipopolysaccharide (LPS). Plays a role in synapse organization, trafficking of synaptic vesicles, the generation of excitatory postsynaptic currents and neuron-neuron synaptic transmission. Plays a role in neuronal cell death after brain damage. Phosphorylates CTTN, CTNND1, PTK2/FAK1, GAB1, PECAM1 and PTPN11. May phosphorylate JUP and PTPN1. Can phosphorylate STAT3, but the biological relevance of this depends on cell type and stimulus. The sequence is that of Tyrosine-protein kinase Fer (FER) from Homo sapiens (Human).